Reading from the N-terminus, the 622-residue chain is Condensin-2 complex subunit H2 (622 aa).

Position 19 is a phosphothreonine (T19). 4 positions are modified to phosphoserine: S95, S199, S223, and S227. The interval W207–A354 is disordered. Positions A262–V273 are enriched in low complexity. At S282 the chain carries Phosphoserine. Basic and acidic residues predominate over residues T294–P312.

This sequence belongs to the CND2 H2 (condensin-2 subunit 2) family. In terms of assembly, component of the condensin-2 complex, which contains the SMC2 and SMC4 heterodimer, and three non SMC subunits, NCAPG2, NCAPH2 and NCAPD3 that probably regulate the complex.

It localises to the nucleus. Its function is as follows. Regulatory subunit of the condensin-2 complex, a complex that seems to provide chromosomes with an additional level of organization and rigidity and in establishing mitotic chromosome architecture. May promote the resolution of double-strand DNA catenanes (intertwines) between sister chromatids. Condensin-mediated compaction likely increases tension in catenated sister chromatids, providing directionality for type II topoisomerase-mediated strand exchanges toward chromatid decatenation. Required for decatenation of chromatin bridges at anaphase. Early in neurogenesis, may play an essential role to ensure accurate mitotic chromosome condensation in neuron stem cells, ultimately affecting neuron pool and cortex size. Seems to have lineage-specific role in T-cell development. The sequence is that of Condensin-2 complex subunit H2 (NCAPH2) from Bos taurus (Bovine).